The primary structure comprises 233 residues: Large ribosomal subunit protein uL1 (233 aa).

Belongs to the universal ribosomal protein uL1 family. As to quaternary structure, part of the 50S ribosomal subunit.

Functionally, binds directly to 23S rRNA. The L1 stalk is quite mobile in the ribosome, and is involved in E site tRNA release. Protein L1 is also a translational repressor protein, it controls the translation of the L11 operon by binding to its mRNA. In Deinococcus deserti (strain DSM 17065 / CIP 109153 / LMG 22923 / VCD115), this protein is Large ribosomal subunit protein uL1.